We begin with the raw amino-acid sequence, 45 residues long: FKBP-type peptidyl-prolyl cis-trans isomerase, chloroplastic (45 aa).

This sequence belongs to the FKBP-type PPIase family. Expressed in leaves, but not in roots.

Its subcellular location is the plastid. The protein localises to the chloroplast thylakoid lumen. It catalyses the reaction [protein]-peptidylproline (omega=180) = [protein]-peptidylproline (omega=0). Its function is as follows. PPIases accelerate the folding of proteins. It catalyzes the cis-trans isomerization of proline imidic peptide bonds in oligopeptides. This Vicia faba (Broad bean) protein is FKBP-type peptidyl-prolyl cis-trans isomerase, chloroplastic.